Reading from the N-terminus, the 195-residue chain is METINNVFDSVISLQSAIPDNSQIINQIFPNVYVLIAHVISLIFLLLLVIRLAWKPTKSYIEARTKEIQRKMEAAEKAQLESEKNLHISRIKLLESKNTAAEIIENAELDAEKTKKKIEAVALNKASQIESEGYSKIKKQELELEKRKNLEVSKLALETAGIFLSKKIDEEENKKIIDDIVNDLTAKLESSSKEK.

A helical transmembrane segment spans residues 28 to 48; it reads IFPNVYVLIAHVISLIFLLLL.

It belongs to the ATPase B chain family. In terms of assembly, F-type ATPases have 2 components, F(1) - the catalytic core - and F(0) - the membrane proton channel. F(1) has five subunits: alpha(3), beta(3), gamma(1), delta(1), epsilon(1). F(0) has three main subunits: a(1), b(2) and c(10-14). The alpha and beta chains form an alternating ring which encloses part of the gamma chain. F(1) is attached to F(0) by a central stalk formed by the gamma and epsilon chains, while a peripheral stalk is formed by the delta and b chains.

Its subcellular location is the cell membrane. In terms of biological role, f(1)F(0) ATP synthase produces ATP from ADP in the presence of a proton or sodium gradient. F-type ATPases consist of two structural domains, F(1) containing the extramembraneous catalytic core and F(0) containing the membrane proton channel, linked together by a central stalk and a peripheral stalk. During catalysis, ATP synthesis in the catalytic domain of F(1) is coupled via a rotary mechanism of the central stalk subunits to proton translocation. Its function is as follows. Component of the F(0) channel, it forms part of the peripheral stalk, linking F(1) to F(0). The chain is ATP synthase subunit b from Malacoplasma penetrans (strain HF-2) (Mycoplasma penetrans).